Reading from the N-terminus, the 440-residue chain is UDP-N-acetylmuramoylalanine--D-glutamate ligase (440 aa).

Position 115-121 (115-121 (GSNGKST)) interacts with ATP.

It belongs to the MurCDEF family.

The protein resides in the cytoplasm. The enzyme catalyses UDP-N-acetyl-alpha-D-muramoyl-L-alanine + D-glutamate + ATP = UDP-N-acetyl-alpha-D-muramoyl-L-alanyl-D-glutamate + ADP + phosphate + H(+). It functions in the pathway cell wall biogenesis; peptidoglycan biosynthesis. Its function is as follows. Cell wall formation. Catalyzes the addition of glutamate to the nucleotide precursor UDP-N-acetylmuramoyl-L-alanine (UMA). The chain is UDP-N-acetylmuramoylalanine--D-glutamate ligase from Aliivibrio fischeri (strain ATCC 700601 / ES114) (Vibrio fischeri).